Consider the following 191-residue polypeptide: Amelogenin, X isoform (191 aa).

The signal sequence occupies residues 1-16; that stretch reads MGTWILFACLLGAAFA. Ser-32 carries the phosphoserine modification. Low complexity predominate over residues 95–117; that stretch reads IPQQPMMPVPGQHSMTPIQHHQP. The segment at 95–191 is disordered; the sequence is IPQQPMMPVP…TDKTKREEVD (97 aa). Positions 118-171 are enriched in pro residues; the sequence is NLPPPAQQPYQPQPVQPQPHQPMQPQPPVHPMQPLPPQPPLPPMFPMQPLPPML.

It belongs to the amelogenin family. In terms of assembly, interacts with KRT5. Post-translationally, phosphorylated by FAM20C in vitro.

Its subcellular location is the secreted. The protein localises to the extracellular space. The protein resides in the extracellular matrix. In terms of biological role, plays a role in biomineralization. Seems to regulate the formation of crystallites during the secretory stage of tooth enamel development. Thought to play a major role in the structural organization and mineralization of developing enamel. This chain is Amelogenin, X isoform (AMELX), found in Homo sapiens (Human).